Consider the following 89-residue polypeptide: Large ribosomal subunit protein bL27 (89 aa).

Positions 1 to 26 (MAHKKAGGSSKNGRDSNAQRRGVKRF) are disordered.

It belongs to the bacterial ribosomal protein bL27 family.

This is Large ribosomal subunit protein bL27 from Maridesulfovibrio salexigens (strain ATCC 14822 / DSM 2638 / NCIMB 8403 / VKM B-1763) (Desulfovibrio salexigens).